We begin with the raw amino-acid sequence, 187 residues long: Orotate phosphoribosyltransferase (187 aa).

Residue 110–118 coordinates 5-phospho-alpha-D-ribose 1-diphosphate; sequence EDVVTTGGS. Residues threonine 114 and arginine 142 each contribute to the orotate site.

This sequence belongs to the purine/pyrimidine phosphoribosyltransferase family. PyrE subfamily. Homodimer. Mg(2+) is required as a cofactor.

It catalyses the reaction orotidine 5'-phosphate + diphosphate = orotate + 5-phospho-alpha-D-ribose 1-diphosphate. Its pathway is pyrimidine metabolism; UMP biosynthesis via de novo pathway; UMP from orotate: step 1/2. Its function is as follows. Catalyzes the transfer of a ribosyl phosphate group from 5-phosphoribose 1-diphosphate to orotate, leading to the formation of orotidine monophosphate (OMP). This is Orotate phosphoribosyltransferase from Thermotoga neapolitana (strain ATCC 49049 / DSM 4359 / NBRC 107923 / NS-E).